Consider the following 431-residue polypeptide: STE20-related kinase adapter protein alpha (431 aa).

Serine 2 and serine 46 each carry phosphoserine. The Protein kinase domain occupies 69–379; that stretch reads YELLTVIGKG…ASTLLNHSFF (311 aa). The segment at 310 to 347 is disordered; that stretch reads LTMSPSRSVANSGLSDSLTTSTPRPSNGDSPSHPYHRT. Residues 312 to 339 are compositionally biased toward polar residues; the sequence is MSPSRSVANSGLSDSLTTSTPRPSNGDS. Threonine 329 and threonine 401 each carry phosphothreonine; by LKB1. Threonine 419 bears the Phosphothreonine mark.

This sequence belongs to the protein kinase superfamily. STE Ser/Thr protein kinase family. STE20 subfamily. As to quaternary structure, component of a trimeric complex composed of STK11/LKB1, STRAD (STRADA or STRADB) and CAB39/MO25 (CAB39/MO25alpha or CAB39L/MO25beta): the complex tethers STK11/LKB1 in the cytoplasm and stimulates its catalytic activity.

It is found in the nucleus. It localises to the cytoplasm. In terms of biological role, pseudokinase which, in complex with CAB39/MO25 (CAB39/MO25alpha or CAB39L/MO25beta), binds to and activates STK11/LKB1. Adopts a closed conformation typical of active protein kinases and binds STK11/LKB1 as a pseudosubstrate, promoting conformational change of STK11/LKB1 in an active conformation. This chain is STE20-related kinase adapter protein alpha (STRADA), found in Pongo abelii (Sumatran orangutan).